We begin with the raw amino-acid sequence, 331 residues long: (E)-beta farnesene synthase MBR_03882 (331 aa).

It belongs to the trichodiene synthase family.

It catalyses the reaction (2E,6E)-farnesyl diphosphate = (E)-beta-farnesene + diphosphate. In terms of biological role, terpene synthase that catalyzes the conversion of (2E,6E)-farnesyl diphosphate (FPP) into the volatile sesquiterpene (E)-beta-farnesene. The protein is (E)-beta farnesene synthase MBR_03882 of Metarhizium brunneum (strain ARSEF 3297).